The sequence spans 573 residues: Proline--tRNA ligase (573 aa).

Belongs to the class-II aminoacyl-tRNA synthetase family. ProS type 1 subfamily. As to quaternary structure, homodimer.

Its subcellular location is the cytoplasm. It carries out the reaction tRNA(Pro) + L-proline + ATP = L-prolyl-tRNA(Pro) + AMP + diphosphate. Catalyzes the attachment of proline to tRNA(Pro) in a two-step reaction: proline is first activated by ATP to form Pro-AMP and then transferred to the acceptor end of tRNA(Pro). As ProRS can inadvertently accommodate and process non-cognate amino acids such as alanine and cysteine, to avoid such errors it has two additional distinct editing activities against alanine. One activity is designated as 'pretransfer' editing and involves the tRNA(Pro)-independent hydrolysis of activated Ala-AMP. The other activity is designated 'posttransfer' editing and involves deacylation of mischarged Ala-tRNA(Pro). The misacylated Cys-tRNA(Pro) is not edited by ProRS. The sequence is that of Proline--tRNA ligase from Methylobacillus flagellatus (strain ATCC 51484 / DSM 6875 / VKM B-1610 / KT).